The following is a 211-amino-acid chain: MSAFNNFVNFVANIVAPMQRQFINFVRIAICIVMVWIGGLKVCQYEADGIAHFVSNSPFFSYMYKKGPNLVDDGTGKMVMEYTLHKNPEGKMVAKNIEWHKENGTYTASYIIGATIVTVGLLTLSGIWFPVSGMAGGLLTFGMSIVTLSFMITTPEIWVPNLGGDMPTPAHGFPYLSAVGRLIVKDVIMMAGGLVAAAECANRILARRKAI.

3 consecutive transmembrane segments (helical) span residues 22 to 42 (FINFVRIAICIVMVWIGGLKV), 111 to 131 (IIGATIVTVGLLTLSGIWFPV), and 133 to 153 (GMAGGLLTFGMSIVTLSFMIT).

The protein to E.coli YkgB. This sequence to H.influenzae HI_0219.

Its subcellular location is the cell membrane. This is an uncharacterized protein from Mannheimia haemolytica (Pasteurella haemolytica).